The chain runs to 165 residues: Immunity protein YokJ (165 aa).

As to quaternary structure, probably interacts with cognate toxin YokI but not with other non-cognate toxins. The interaction inhibits the toxic activity of YokI.

The protein localises to the cytoplasm. Immunity component of one of 6 LXG toxin-immunity modules in this strain. They promote kin selection, mediate competition in biofilms, and drive spatial segregation of different strains, indicating that LXG toxins may help avoid warfare between strains in biofilms. Mediates intercellular competition during biofilm formation; disruption of the operon disadvantages the bacteria, but overexpression of the cognate immunity protein restores growth in competition with wild-type. In situ neutralizes the toxic effect of cognate toxin YokI. Neutralizes the ability to inhibit growth of cognate toxin YokI upon expression in E.coli. Does not have immunity protein activity on other LXG toxins. The chain is Immunity protein YokJ (yokJ) from Bacillus subtilis (strain 168).